The sequence spans 353 residues: Mitochondrial distribution and morphology protein 12 (353 aa).

Residues 1–330 (MSFDIKWENL…WPSWICLDMN (330 aa)) enclose the SMP-LTD domain. Composition is skewed to acidic residues over residues 64 to 75 (DEFYEDTTDSPE), 84 to 103 (TGDD…DDDG), and 330 to 342 (NDDD…EENP). 2 disordered regions span residues 64–140 (DEFY…NRSR) and 330–353 (NDDD…HVGS).

This sequence belongs to the MDM12 family. In terms of assembly, component of the ER-mitochondria encounter structure (ERMES) or MDM complex, composed of MMM1, MDM10, MDM12 and MDM34. An MMM1 homodimer associates with one molecule of MDM12 on each side in a pairwise head-to-tail manner, and the SMP-LTD domains of MMM1 and MDM12 generate a continuous hydrophobic tunnel for phospholipid trafficking.

It localises to the mitochondrion outer membrane. It is found in the endoplasmic reticulum membrane. Component of the ERMES/MDM complex, which serves as a molecular tether to connect the endoplasmic reticulum (ER) and mitochondria. Components of this complex are involved in the control of mitochondrial shape and protein biogenesis, and function in nonvesicular lipid trafficking between the ER and mitochondria. MDM12 is required for the interaction of the ER-resident membrane protein MMM1 and the outer mitochondrial membrane-resident beta-barrel protein MDM10. The MDM12-MMM1 subcomplex functions in the major beta-barrel assembly pathway that is responsible for biogenesis of all mitochondrial outer membrane beta-barrel proteins, and acts in a late step after the SAM complex. The MDM10-MDM12-MMM1 subcomplex further acts in the TOM40-specific pathway after the action of the MDM12-MMM1 complex. Essential for establishing and maintaining the structure of mitochondria and maintenance of mtDNA nucleoids. In Candida tropicalis (strain ATCC MYA-3404 / T1) (Yeast), this protein is Mitochondrial distribution and morphology protein 12.